A 357-amino-acid polypeptide reads, in one-letter code: Mitochondrial carrier protein LEU5 (357 aa).

Helical transmembrane passes span 31–47, 103–119, 136–153, 208–228, 269–285, and 325–347; these read DYIV…GSCA, LRIF…YEQI, LVSG…TYPL, VPTV…HDLL, ISGG…AYPF, and GFFV…SFFV. Solcar repeat units lie at residues 31–122, 130–231, and 262–354; these read DYIV…IRNT, ESHW…LHDV, and LRTW…MKWN.

It belongs to the mitochondrial carrier (TC 2.A.29) family.

It localises to the mitochondrion inner membrane. Its function is as follows. Required for the accumulation of coenzyme A in the mitochondrial matrix. This is Mitochondrial carrier protein LEU5 (LEU5) from Saccharomyces cerevisiae (strain ATCC 204508 / S288c) (Baker's yeast).